A 326-amino-acid chain; its full sequence is Pantothenate kinase (326 aa).

104-111 (GSVAVGKS) is a binding site for ATP.

This sequence belongs to the prokaryotic pantothenate kinase family.

The protein localises to the cytoplasm. The enzyme catalyses (R)-pantothenate + ATP = (R)-4'-phosphopantothenate + ADP + H(+). Its pathway is cofactor biosynthesis; coenzyme A biosynthesis; CoA from (R)-pantothenate: step 1/5. The chain is Pantothenate kinase from Parvibaculum lavamentivorans (strain DS-1 / DSM 13023 / NCIMB 13966).